The chain runs to 329 residues: DNA-directed RNA polymerase subunit alpha (329 aa).

The segment at Met-1–Lys-232 is alpha N-terminal domain (alpha-NTD). Residues Phe-246–Ala-329 form an alpha C-terminal domain (alpha-CTD) region.

The protein belongs to the RNA polymerase alpha chain family. In terms of assembly, homodimer. The RNAP catalytic core consists of 2 alpha, 1 beta, 1 beta' and 1 omega subunit. When a sigma factor is associated with the core the holoenzyme is formed, which can initiate transcription.

It carries out the reaction RNA(n) + a ribonucleoside 5'-triphosphate = RNA(n+1) + diphosphate. Its function is as follows. DNA-dependent RNA polymerase catalyzes the transcription of DNA into RNA using the four ribonucleoside triphosphates as substrates. The chain is DNA-directed RNA polymerase subunit alpha from Hydrogenovibrio crunogenus (strain DSM 25203 / XCL-2) (Thiomicrospira crunogena).